The chain runs to 208 residues: Imidazoleglycerol-phosphate dehydratase (208 aa).

Belongs to the imidazoleglycerol-phosphate dehydratase family.

It is found in the cytoplasm. It carries out the reaction D-erythro-1-(imidazol-4-yl)glycerol 3-phosphate = 3-(imidazol-4-yl)-2-oxopropyl phosphate + H2O. It functions in the pathway amino-acid biosynthesis; L-histidine biosynthesis; L-histidine from 5-phospho-alpha-D-ribose 1-diphosphate: step 6/9. The chain is Imidazoleglycerol-phosphate dehydratase from Psychrobacter sp. (strain PRwf-1).